We begin with the raw amino-acid sequence, 227 residues long: UPF0173 metal-dependent hydrolase Bcer98_3294 (227 aa).

It belongs to the UPF0173 family.

The protein is UPF0173 metal-dependent hydrolase Bcer98_3294 of Bacillus cytotoxicus (strain DSM 22905 / CIP 110041 / 391-98 / NVH 391-98).